A 1440-amino-acid chain; its full sequence is Protein lin-15B (1440 aa).

4 disordered regions span residues 1 to 22, 48 to 67, 618 to 660, and 738 to 769; these read MQTL…SSSS, ILRH…HLDA, PKEE…GRPI, and KDEP…PSSY. Low complexity predominate over residues 10–22; sequence TSNPASIPTSSSS. Low complexity predominate over residues 631–646; sequence STSSPATSSPTIIRPR. Positions 757–767 are enriched in polar residues; that stretch reads NRTTASSQGPS. A THAP-type zinc finger spans residues 1135-1209; sequence NPGVCCFCSK…LLKGMIPDAA (75 aa). 3 disordered regions span residues 1239-1281, 1298-1350, and 1395-1440; these read AIDL…EPSQ, RELS…GTSQ, and FADE…PSNE. Over residues 1254-1264 the composition is skewed to acidic residues; it reads TQEEEEEEEYE. The a.T hook 1 DNA-binding region spans 1317–1329; the sequence is PNPRGRPRKYPKN. Over residues 1396–1407 the composition is skewed to acidic residues; it reads ADEEEEEEEYEE. A DNA-binding region (a.T hook 2) is located at residues 1418 to 1430; sequence GRPVGRPRKDANK.

In terms of biological role, synthetic multivulva (synMuv) class B protein. SynMuv proteins are required to repress the induction of vulval development. Acts redundantly with SynMuv class A protein lin-15A to negatively regulate vulval development. Regulates let-23 basal activity. The protein is Protein lin-15B of Caenorhabditis elegans.